An 86-amino-acid polypeptide reads, in one-letter code: Neurotoxin LmNaTx34.1 (86 aa).

A signal peptide spans 1–18; the sequence is MKTVILVVIALMVIEVQG. Positions 19–85 constitute an LCN-type CS-alpha/beta domain; sequence DGYLMVRAGI…IWTYEKNTCS (67 aa). 4 disulfides stabilise this stretch: C32–C84, C36–C57, C43–C64, and C47–C66.

This sequence belongs to the long (4 C-C) scorpion toxin superfamily. Sodium channel inhibitor family. Beta subfamily. As to expression, expressed by the venom gland.

The protein localises to the secreted. Its function is as follows. Binds voltage-independently at site-4 of sodium channels (Nav) and shift the voltage of activation toward more negative potentials thereby affecting sodium channel activation and promoting spontaneous and repetitive firing. The chain is Neurotoxin LmNaTx34.1 from Lychas mucronatus (Chinese swimming scorpion).